Reading from the N-terminus, the 514-residue chain is Deoxynucleoside triphosphate triphosphohydrolase SAMHD1 homolog (514 aa).

The segment at 1-24 (MNNTFKYVNEDVSGTEGEESDYDP) is disordered. A GTP-binding site is contributed by lysine 80. Position 83 (asparagine 83) interacts with a 2'-deoxyribonucleoside 5'-triphosphate. GTP is bound at residue 101-109 (DTEQFQRLR). Positions 113 and 128 each coordinate substrate. The HD domain occupies 128–259 (RFEHSIGVSH…SVDVDKFDYL (132 aa)). Zn(2+) is bound by residues histidine 131, histidine 170, and aspartate 171. Histidine 174 provides a ligand contact to substrate. Histidine 196 is a catalytic residue. Substrate-binding positions include 252–258 (DVDKFDY), tyrosine 258, and aspartate 262. Residue aspartate 254 participates in Zn(2+) binding. A 2'-deoxyribonucleoside 5'-triphosphate contacts are provided by residues arginine 276, 291-293 (LSK), and asparagine 297. Substrate contacts are provided by residues arginine 305 and 309–314 (HKLVYT). The a 2'-deoxyribonucleoside 5'-triphosphate site is built by histidine 315 and lysine 316. Residues arginine 380 and lysine 384 each coordinate GTP.

The protein belongs to the SAMHD1 family. Homodimer; in absence of GTP and dNTP. Homotetramer; in GTP- and dNTP-bound form. Zn(2+) serves as cofactor.

The catalysed reaction is a 2'-deoxyribonucleoside 5'-triphosphate + H2O = a 2'-deoxyribonucleoside + triphosphate + H(+). With respect to regulation, allosterically activated and regulated via the combined actions of GTP and dNTPs (dATP, dGTP, dTTP and dCTP): Allosteric site 1 binds GTP, while allosteric site 2 binds dNTP. Allosteric activation promotes the formation of highly active homotetramers. In terms of biological role, has deoxynucleoside triphosphate (dNTPase) activity. In Dictyostelium discoideum (Social amoeba), this protein is Deoxynucleoside triphosphate triphosphohydrolase SAMHD1 homolog.